The chain runs to 100 residues: Osteocalcin (100 aa).

Residues 1–23 form the signal peptide; it reads MRALTLLALLALAALCITGQAGA. Residues 24–51 constitute a propeptide that is removed on maturation; it reads KPSGADSSKGAAFVSKQEGSEVVKRPRR. The 47-residue stretch at 52 to 98 folds into the Gla domain; that stretch reads YLYQWLGAPVPYPDPLEPKREVCELNPDCDELADHIGFQEAYRRFYG. Ca(2+) contacts are provided by Glu-68, Glu-72, Glu-75, and Asp-81. 4-carboxyglutamate is present on residues Glu-68, Glu-72, and Glu-75. The cysteines at positions 74 and 80 are disulfide-linked.

The protein belongs to the osteocalcin/matrix Gla protein family. In terms of processing, gamma-carboxyglutamate residues are formed by vitamin K dependent carboxylation by GGCX. These residues are essential for the binding of calcium. Decarboxylation promotes the hormone activity.

It is found in the secreted. Its function is as follows. The carboxylated form is one of the main organic components of the bone matrix, which constitutes 1-2% of the total bone protein: it acts as a negative regulator of bone formation and is required to limit bone formation without impairing bone resorption or mineralization. The carboxylated form binds strongly to apatite and calcium. In terms of biological role, the uncarboxylated form acts as a hormone secreted by osteoblasts, which regulates different cellular processes, such as energy metabolism, male fertility and brain development. Regulates of energy metabolism by acting as a hormone favoring pancreatic beta-cell proliferation, insulin secretion and sensitivity and energy expenditure. Uncarboxylated osteocalcin hormone also promotes testosterone production in the testes: acts as a ligand for G protein-coupled receptor GPRC6A at the surface of Leydig cells, initiating a signaling response that promotes the expression of enzymes required for testosterone synthesis in a CREB-dependent manner. Also acts as a regulator of brain development: osteocalcin hormone crosses the blood-brain barrier and acts as a ligand for GPR158 on neurons, initiating a signaling response that prevents neuronal apoptosis in the hippocampus, favors the synthesis of all monoamine neurotransmitters and inhibits that of gamma-aminobutyric acid (GABA). Osteocalcin also crosses the placenta during pregnancy and maternal osteocalcin is required for fetal brain development. The sequence is that of Osteocalcin from Pongo pygmaeus (Bornean orangutan).